The primary structure comprises 1227 residues: Codanin-1 (1227 aa).

Alanine 2 carries the N-acetylalanine modification. Residues 63 to 294 are disordered; that stretch reads RVLPQGPPTP…SLTDEPADPA (232 aa). Threonine 71 is modified (phosphothreonine). Residues 128–137 show a composition bias toward basic and acidic residues; that stretch reads ARERGGRGLE. Positions 155–167 are enriched in low complexity; that stretch reads GSGSPSRPSLTLS. Residues 188 to 208 are interaction with ASF1A/B; sequence PTGTKPSRRINPTPVSEERSL. Positions 214 to 232 are enriched in polar residues; it reads CFTSPPISCVPSSQPSALD. The span at 247–260 shows a compositional bias: basic and acidic residues; it reads LQEEREMLRKERSK. Phosphoserine occurs at positions 265 and 285. 2 helical membrane passes run 312–332 and 626–646; these read CIAE…FQLL and FAVV…VAFL.

In terms of assembly, found in a cytosolic complex with ASF1A, ASF1B, IPO4 and histones H3.1 and H4. Ubiquitously expressed. Isoform 3 is not found in erythroid cells.

The protein localises to the cytoplasm. It is found in the nucleus. The protein resides in the membrane. May act as a negative regulator of ASF1 in chromatin assembly. This is Codanin-1 (CDAN1) from Homo sapiens (Human).